The primary structure comprises 286 residues: Pantothenate synthetase (286 aa).

ATP is bound at residue 31 to 38; it reads MGALHDGH. H38 functions as the Proton donor in the catalytic mechanism. Q62 serves as a coordination point for (R)-pantoate. Q62 provides a ligand contact to beta-alanine. Residue 148-151 participates in ATP binding; it reads GKKD. A (R)-pantoate-binding site is contributed by Q154. Residues V177 and 185 to 188 contribute to the ATP site; that span reads KSSR.

This sequence belongs to the pantothenate synthetase family. As to quaternary structure, homodimer.

It is found in the cytoplasm. It catalyses the reaction (R)-pantoate + beta-alanine + ATP = (R)-pantothenate + AMP + diphosphate + H(+). The protein operates within cofactor biosynthesis; (R)-pantothenate biosynthesis; (R)-pantothenate from (R)-pantoate and beta-alanine: step 1/1. Catalyzes the condensation of pantoate with beta-alanine in an ATP-dependent reaction via a pantoyl-adenylate intermediate. This Staphylococcus carnosus (strain TM300) protein is Pantothenate synthetase.